We begin with the raw amino-acid sequence, 443 residues long: MESLAALYKNHIVTLQERTRDVLARFKLDALLIHSGELFNVFLDDHPYPFKVNPQFKAWVPVTQVPNCWLLVDGVNKPKLWFYLPVDYWHNVEPLPTSFWTEEVEVVALPKADGIGSQLPAARGNIGYIGPVPERALQLDIAASNINPKGVIDYLHYYRAYKTDYELACMREAQKMAVSGHRAAEEAFRSGMSEFDINLAYLTATGHRDTDVPYSNIVALNEHAAVLHYTKLDHQAPSEMRSFLLDAGAEYNGYAADLTRTWSAKSDNDYAHLVKDVNDEQLALIATMKAGVSYVDYHIQFHQRIAKLLRKHQIITDMSEEAMVENDLTGPFMPHGIGHPLGLQVHDVAGFMQDDSGTHLAAPSKYPYLRCTRVLQPRMVLTIEPGIYFIESLLAPWCEGPFSKHFNWQKIEALKPFGGIRIEDNVVIHENGVENMTRDLKLA.

Asp246, Asp257, His339, Glu384, and Glu423 together coordinate Mn(2+).

This sequence belongs to the peptidase M24B family. Bacterial-type prolidase subfamily. The cofactor is Mn(2+).

It carries out the reaction Xaa-L-Pro dipeptide + H2O = an L-alpha-amino acid + L-proline. Splits dipeptides with a prolyl residue in the C-terminal position. This chain is Xaa-Pro dipeptidase, found in Salmonella paratyphi B (strain ATCC BAA-1250 / SPB7).